Consider the following 226-residue polypeptide: E3 ubiquitin-protein ligase RNF186 (226 aa).

The segment at 39–85 (CLVCREPYSGVRPPKLLGCQHAFCAVCLKLLLCVQDDAWSIPCPLCR) adopts an RING-type zinc-finger fold. The tract at residues 121 to 143 (GLANPATLTAGQPREAGEEEQDA) is disordered. The next 2 membrane-spanning stretches (helical) occupy residues 157 to 177 (HLLLLVLLIILILPFIYPGVI) and 179 to 199 (WVLSFLETLALLLALLFCSHP).

In terms of assembly, interacts with BNIP1. In terms of processing, polyubiquitinated. 'Lys-29' autoubiquitination leads to proteasomal degradation.

The protein localises to the endoplasmic reticulum membrane. The catalysed reaction is S-ubiquitinyl-[E2 ubiquitin-conjugating enzyme]-L-cysteine + [acceptor protein]-L-lysine = [E2 ubiquitin-conjugating enzyme]-L-cysteine + N(6)-ubiquitinyl-[acceptor protein]-L-lysine.. The protein operates within protein modification; protein ubiquitination. E3 ubiquitin protein ligase that is part of an apoptotic signaling pathway activated by endoplasmic reticulum stress. Stimulates the expression of proteins specific of the unfolded protein response (UPR), ubiquitinates BNIP1 and regulates its localization to the mitochondrion and induces calcium release from the endoplasmic reticulum that ultimately leads to cell apoptosis. Plays a role in the maintenance of intestinal homeostasis and clearance of enteric pathogens. Upon NOD2 stimulation, ubiquitinates the ER stress sensor activating transcription factor 6/ATF6 and promotes the unfolded protein response UPR. Participates in basal level of autophagy maintenance by regulating the ubiquitination of EPHB2. Upon stimulation by ligand EFNB1, ubiquitinates EPHB2 and further recruits MAP1LC3B for autophagy induction. Controls nutrient sensing by ubiquitinating Sestrin-2/SESN2, which is an intracellular sensor of cytosolic leucine and inhibitor of mTORC1 activity. The sequence is that of E3 ubiquitin-protein ligase RNF186 from Bos taurus (Bovine).